Reading from the N-terminus, the 192-residue chain is Ribosomal RNA small subunit methyltransferase G (192 aa).

Residues Gly-63, Phe-68, 112–113 (IE), and Arg-125 each bind S-adenosyl-L-methionine.

The protein belongs to the methyltransferase superfamily. RNA methyltransferase RsmG family.

It localises to the cytoplasm. It carries out the reaction guanosine(527) in 16S rRNA + S-adenosyl-L-methionine = N(7)-methylguanosine(527) in 16S rRNA + S-adenosyl-L-homocysteine. Functionally, specifically methylates the N7 position of guanine in position 527 of 16S rRNA. The protein is Ribosomal RNA small subunit methyltransferase G of Rickettsia bellii (strain OSU 85-389).